The primary structure comprises 517 residues: Cytochrome P450 monooxygenase sdnE (517 aa).

Residues S4–Y24 traverse the membrane as a helical segment. N111 carries N-linked (GlcNAc...) asparagine glycosylation. Residues F219–P239 traverse the membrane as a helical segment. Heme is bound at residue C456.

This sequence belongs to the cytochrome P450 family. The cofactor is heme.

It is found in the membrane. It participates in antibiotic biosynthesis. Cytochrome P450 monooxygenase; part of the gene cluster that mediates the biosynthesis of sordarin and hypoxysordarin, glycoside antibiotics with a unique tetracyclic diterpene aglycone structure. First, the geranylgeranyl diphosphate synthase sdnC constructs GGDP from farnesyl diphosphate and isopentenyl diphosphate. The diterpene cyclase sdnA then catalyzes the cyclization of GGDP to afford cycloaraneosene. Cycloaraneosene is then hydroxylated four times by the putative cytochrome P450 monooxygenases sdnB, sdnE, sdnF and sdnH to give a hydroxylated cycloaraneosene derivative such as cycloaraneosene-8,9,13,19-tetraol. Although the order of the hydroxylations is unclear, at least C8, C9 and C13 of the cycloaraneosene skeleton are hydroxylated before the sordaricin formation. Dehydration of the 13-hydroxy group of the hydroxylated cycloaraneosene derivative might be catalyzed by an unassigned hypothetical protein such as sdnG and sdnP to construct the cyclopentadiene moiety. The FAD-dependent oxidoreductase sdnN is proposed to catalyze the oxidation at C9 of the hydroxylated cycloaraneosene derivative and also catalyze the Baeyer-Villiger oxidation to give the lactone intermediate. The presumed lactone intermediate would be hydrolyzed to give an acrolein moiety and a carboxylate moiety. Then, [4+2]cycloaddition would occur between the acrolein moiety and the cyclopentadiene moiety to give sordaricin. SdnN might also be involved in the [4+2]cycloaddition after the hypothesized oxidation to accommodate the oxidized product and prompt the [4+2]cycloaddition. GDP-6-deoxy-D-altrose may be biosynthesized from GDP-D-mannose by the putative GDP-mannose-4,6-dehydratase sdnI and the short-chain dehydrogenase sdnK. The glycosyltransferase sdnJ catalyzes the attachment of 6-deoxy-D-altrose onto the 19-hydroxy group of sordaricin to give 4'-O-demethylsordarin. The methyltransferase sdnD would complete the biosynthesis of sordarin. Sordarin can be further modified into hypoxysordarin. The unique acyl chain at the 3'-hydroxy group of hypoxysordarin would be constructed by an iterative type I PKS sdnO and the trans-acting polyketide methyltransferase sdnL. SdnL would be responsible for the introduction of an alpha-methyl group of the polyketide chain. Alternatively, the beta-lactamase-like protein sdnR might be responsible for the cleavage and transfer of the polyketide chain from the PKS sdnO to sordarin. Two putative cytochrome P450 monooxygenases, sdnQ and sdnT, might catalyze the epoxidations of the polyketide chain to complete the biosynthesis of hypoxysordarin. Transcriptional regulators sdnM and sdnS are presumably encoded for the transcriptional regulation of the expression of the sdn gene cluster. In Sordaria araneosa (Pleurage araneosa), this protein is Cytochrome P450 monooxygenase sdnE.